We begin with the raw amino-acid sequence, 973 residues long: UvrABC system protein A (973 aa).

ATP is bound at residue 34-41 (GLSGSGKS). 2 consecutive ABC transporter domains span residues 330–609 (WAKS…PNSI) and 629–958 (AKKN…QFLK). 662–669 (GVSGGGKS) provides a ligand contact to ATP. The C4-type zinc finger occupies 761–787 (CEACQGDGVIKIEMHFLPDVYVTCDVC).

Belongs to the ABC transporter superfamily. UvrA family. In terms of assembly, forms a heterotetramer with UvrB during the search for lesions.

The protein resides in the cytoplasm. In terms of biological role, the UvrABC repair system catalyzes the recognition and processing of DNA lesions. UvrA is an ATPase and a DNA-binding protein. A damage recognition complex composed of 2 UvrA and 2 UvrB subunits scans DNA for abnormalities. When the presence of a lesion has been verified by UvrB, the UvrA molecules dissociate. This is UvrABC system protein A from Mesorhizobium japonicum (strain LMG 29417 / CECT 9101 / MAFF 303099) (Mesorhizobium loti (strain MAFF 303099)).